The chain runs to 122 residues: Large ribosomal subunit protein uL14 (122 aa).

It belongs to the universal ribosomal protein uL14 family. As to quaternary structure, part of the 50S ribosomal subunit. Forms a cluster with proteins L3 and L19. In the 70S ribosome, L14 and L19 interact and together make contacts with the 16S rRNA in bridges B5 and B8.

Binds to 23S rRNA. Forms part of two intersubunit bridges in the 70S ribosome. The sequence is that of Large ribosomal subunit protein uL14 from Acidiphilium cryptum (strain JF-5).